Reading from the N-terminus, the 212-residue chain is Pyridoxine/pyridoxamine 5'-phosphate oxidase (212 aa).

Substrate contacts are provided by residues 8-11 and K66; that span reads RREY. FMN-binding positions include 61–66, 76–77, R82, K83, and Q105; these read RIVLLK and FT. Y123, R127, and S131 together coordinate substrate. FMN is bound by residues 140 to 141 and W185; that span reads QS. Residue 191–193 participates in substrate binding; sequence RLH. R195 contributes to the FMN binding site.

This sequence belongs to the pyridoxamine 5'-phosphate oxidase family. As to quaternary structure, homodimer. The cofactor is FMN.

The catalysed reaction is pyridoxamine 5'-phosphate + O2 + H2O = pyridoxal 5'-phosphate + H2O2 + NH4(+). It catalyses the reaction pyridoxine 5'-phosphate + O2 = pyridoxal 5'-phosphate + H2O2. The protein operates within cofactor metabolism; pyridoxal 5'-phosphate salvage; pyridoxal 5'-phosphate from pyridoxamine 5'-phosphate: step 1/1. It participates in cofactor metabolism; pyridoxal 5'-phosphate salvage; pyridoxal 5'-phosphate from pyridoxine 5'-phosphate: step 1/1. In terms of biological role, catalyzes the oxidation of either pyridoxine 5'-phosphate (PNP) or pyridoxamine 5'-phosphate (PMP) into pyridoxal 5'-phosphate (PLP). The sequence is that of Pyridoxine/pyridoxamine 5'-phosphate oxidase from Shewanella putrefaciens (strain CN-32 / ATCC BAA-453).